The chain runs to 278 residues: Large ribosomal subunit protein uL2 (278 aa).

Disordered stretches follow at residues 28 to 56 (KPVK…GIAG) and 221 to 278 (RGVA…KKKR). Basic residues predominate over residues 269–278 (IRSRHAKKKR).

The protein belongs to the universal ribosomal protein uL2 family. As to quaternary structure, part of the 50S ribosomal subunit. Forms a bridge to the 30S subunit in the 70S ribosome.

Functionally, one of the primary rRNA binding proteins. Required for association of the 30S and 50S subunits to form the 70S ribosome, for tRNA binding and peptide bond formation. It has been suggested to have peptidyltransferase activity; this is somewhat controversial. Makes several contacts with the 16S rRNA in the 70S ribosome. This Rhizorhabdus wittichii (strain DSM 6014 / CCUG 31198 / JCM 15750 / NBRC 105917 / EY 4224 / RW1) (Sphingomonas wittichii) protein is Large ribosomal subunit protein uL2.